The primary structure comprises 771 residues: Tetratricopeptide repeat-containing protein trd-1 (771 aa).

TPR repeat units lie at residues 389-415 (LEMW…IRRL), 416-449 (IEQK…SDDR), 451-484 (ARAH…QPIQ), 485-518 (LGTW…QPDH), 520-552 (EAWN…NYEH), and 553-586 (PNVW…NKRG).

The protein belongs to the TTC27 family. In terms of tissue distribution, expressed in the spermatheca.

It is found in the cytoplasm. Developmental protein required for cell fate determination in both the germline and seam cells of the developing epidermis. Specifically, involved in sex determination and may function in parallel or downstream of other sex determination factors, including tra-2 and fem-3, to promote oogenesis in its role in the regulation of the switch from spermatogenesis to oogenesis in the gonads. Also implicated in the mitosis to meiosis switch in distal tip cells. The polypeptide is Tetratricopeptide repeat-containing protein trd-1 (Caenorhabditis elegans).